A 395-amino-acid chain; its full sequence is Elongation factor Tu (395 aa).

The 200-residue stretch at 6 to 205 (KPHINVGTIG…NALEKIDLPI (200 aa)) folds into the tr-type G domain. The interval 15 to 22 (GHVDHGKT) is G1. 15 to 22 (GHVDHGKT) contributes to the GTP binding site. Residue T22 participates in Mg(2+) binding. Positions 59-63 (GITIS) are G2. Residues 80 to 83 (DCPG) are G3. Residues 80–84 (DCPGH) and 135–138 (NKCD) each bind GTP. Residues 135–138 (NKCD) are G4. Positions 173–175 (SAV) are G5.

It belongs to the TRAFAC class translation factor GTPase superfamily. Classic translation factor GTPase family. EF-Tu/EF-1A subfamily. In terms of assembly, monomer.

The protein localises to the cytoplasm. The catalysed reaction is GTP + H2O = GDP + phosphate + H(+). Its function is as follows. GTP hydrolase that promotes the GTP-dependent binding of aminoacyl-tRNA to the A-site of ribosomes during protein biosynthesis. The protein is Elongation factor Tu of Ehrlichia ruminantium (strain Gardel).